A 311-amino-acid chain; its full sequence is Malate dehydrogenase (311 aa).

NAD(+) is bound by residues 7-13 and Asp-34; that span reads GAAGGIG. 2 residues coordinate substrate: Arg-81 and Arg-87. NAD(+) is bound by residues Asn-94 and 117-119; that span reads ITN. 2 residues coordinate substrate: Asn-119 and Arg-153. Residue His-177 is the Proton acceptor of the active site. Residue Met-227 participates in NAD(+) binding.

This sequence belongs to the LDH/MDH superfamily. MDH type 1 family. Homodimer.

The enzyme catalyses (S)-malate + NAD(+) = oxaloacetate + NADH + H(+). Its function is as follows. Catalyzes the reversible oxidation of malate to oxaloacetate. The protein is Malate dehydrogenase of Shewanella piezotolerans (strain WP3 / JCM 13877).